Consider the following 200-residue polypeptide: Pre-mRNA cleavage factor Im 25 kDa subunit 2 (200 aa).

The 128-residue stretch at 45–172 (GMRTSVEGIL…KLLAVPLFEL (128 aa)) folds into the Nudix hydrolase domain. Residues 72-74 (TFC) are interaction with RNA. The Nudix box signature appears at 79–100 (GRLKPGENEADGLKRKLTSKLG).

The protein belongs to the Nudix hydrolase family. CPSF5 subfamily. Homodimer. Component of the cleavage factor Im (CFIm) complex. Forms a complex with cleavage and polyadenylation specificity factor (CPSF) subunits FIPS5, PAPS4 and CPSF30.

It localises to the nucleus. In terms of biological role, component of the cleavage factor Im (CFIm) complex that plays a key role in pre-mRNA 3'-processing. Involved in association with CPSF6 or CPSF7 in pre-MRNA 3'-end poly(A) site cleavage and poly(A) addition. NUDT21/CPSF5 binds to cleavage and polyadenylation RNA substrates. The homodimer mediates simultaneous sequence-specific recognition of two 5'-UGUA-3' elements within the pre-mRNA. Binds to, but does not hydrolyze mono- and di-adenosine nucleotides. May have a role in mRNA export. The sequence is that of Pre-mRNA cleavage factor Im 25 kDa subunit 2 from Arabidopsis thaliana (Mouse-ear cress).